Consider the following 496-residue polypeptide: NADP-dependent glyceraldehyde-3-phosphate dehydrogenase (496 aa).

Substrate-binding positions include R116 and N169–Y170. Residues K192, T195, and D230 each coordinate NADP(+). Position 245–249 (G245–G249) interacts with NAD(+). E264 functions as the Proton acceptor in the catalytic mechanism. Residue R297–T299 participates in substrate binding. C298 acts as the Nucleophile in catalysis. Residue E391 participates in NADP(+) binding. R451 provides a ligand contact to substrate.

This sequence belongs to the aldehyde dehydrogenase family.

It is found in the cytoplasm. The protein localises to the cytosol. The catalysed reaction is D-glyceraldehyde 3-phosphate + NADP(+) + H2O = (2R)-3-phosphoglycerate + NADPH + 2 H(+). Its activity is regulated as follows. Competitive inhibition by NADPH, 3-phospho-D-glycerate and ATP. Functionally, important as a means of generating NADPH for biosynthetic reactions. May be a main source of cytosolic NADPH for mannitol biosynthesis in leaves. This Apium graveolens (Celery) protein is NADP-dependent glyceraldehyde-3-phosphate dehydrogenase.